The sequence spans 381 residues: Succinyl-diaminopimelate desuccinylase (381 aa).

A Zn(2+)-binding site is contributed by His68. Asp70 is an active-site residue. Zn(2+) is bound at residue Asp101. The Proton acceptor role is filled by Glu135. 3 residues coordinate Zn(2+): Glu136, Glu164, and His350.

The protein belongs to the peptidase M20A family. DapE subfamily. Homodimer. The cofactor is Zn(2+). Co(2+) serves as cofactor.

It carries out the reaction N-succinyl-(2S,6S)-2,6-diaminopimelate + H2O = (2S,6S)-2,6-diaminopimelate + succinate. Its pathway is amino-acid biosynthesis; L-lysine biosynthesis via DAP pathway; LL-2,6-diaminopimelate from (S)-tetrahydrodipicolinate (succinylase route): step 3/3. Catalyzes the hydrolysis of N-succinyl-L,L-diaminopimelic acid (SDAP), forming succinate and LL-2,6-diaminopimelate (DAP), an intermediate involved in the bacterial biosynthesis of lysine and meso-diaminopimelic acid, an essential component of bacterial cell walls. The protein is Succinyl-diaminopimelate desuccinylase of Neisseria gonorrhoeae (strain ATCC 700825 / FA 1090).